The sequence spans 898 residues: Dipeptidyl peptidase 8 (898 aa).

Active-site charge relay system residues include serine 755, aspartate 833, and histidine 865.

The protein belongs to the peptidase S9B family. DPPIV subfamily. As to quaternary structure, homodimer. Forms a ternary complex with NLRP1, composed of a DPP8 homodimer, one full-length NLRP1 protein, and one cleaved C-terminus of NLRP1 (NACHT, LRR and PYD domains-containing protein 1, C-terminus). Forms a ternary complex with CARD8, composed of a DPP8 homodimer, one full-length NLRP1 protein, and one cleaved C-terminus of CARD8 (Caspase recruitment domain-containing protein 8, C-terminus). In the ternary complex, only one subunit of the DPP8 homodimer is bound to NLRP1 or CARD8. In terms of tissue distribution, ubiquitously expressed, with highest levels in testis, placenta, prostate, muscle and brain.

It is found in the cytoplasm. It carries out the reaction Release of an N-terminal dipeptide, Xaa-Yaa-|-Zaa-, from a polypeptide, preferentially when Yaa is Pro, provided Zaa is neither Pro nor hydroxyproline.. With respect to regulation, inhibited by zinc. Inhibited by the serine proteinase inhibitor 4-(2-aminoethyl)benzenesulphonyl fluoride (AEBSF), and by di-isopropylfluorophosphate. Specifically inhibited by isoindoline derivatives. Inhibited by Val-boroPro (Talabostat, PT-100), a non-selective inhibitor, which triggers pyroptosis in monocytes and macrophages. Its function is as follows. Dipeptidyl peptidase that cleaves off N-terminal dipeptides from proteins having a Pro or Ala residue at position 2. Acts as a key inhibitor of caspase-1-dependent monocyte and macrophage pyroptosis in resting cells by preventing activation of NLRP1 and CARD8. Sequesters the cleaved C-terminal part of NLRP1 and CARD8, which respectively constitute the active part of the NLRP1 and CARD8 inflammasomes, in a ternary complex, thereby preventing their oligomerization and activation. The dipeptidyl peptidase activity is required to suppress NLRP1 and CARD8; however, neither NLRP1 nor CARD8 are bona fide substrates of DPP8, suggesting the existence of substrate(s) required for NLRP1 and CARD8 inhibition. This is Dipeptidyl peptidase 8 from Homo sapiens (Human).